The sequence spans 69 residues: AREGYLVSKSTGCKYECFWLGKNEGCDKECKAPNQGGGYGYCHAFACWCENLPESTPTYPIPGKSCGKK.

Residue Ala-1 is a signal peptide. The 66-residue stretch at 2-67 (REGYLVSKST…TYPIPGKSCG (66 aa)) folds into the LCN-type CS-alpha/beta domain. 4 disulfide bridges follow: Cys-13-Cys-66, Cys-17-Cys-42, Cys-26-Cys-47, and Cys-30-Cys-49. Cys-66 is subject to Cysteine amide. The propeptide occupies 67 to 69 (GKK).

Belongs to the long (4 C-C) scorpion toxin superfamily. Sodium channel inhibitor family. Beta subfamily. In terms of tissue distribution, expressed by the venom gland.

It localises to the secreted. Beta toxins bind voltage-independently at site-4 of sodium channels (Nav) and shift the voltage of activation toward more negative potentials thereby affecting sodium channel activation and promoting spontaneous and repetitive firing. This is Neurotoxin Cex7 from Centruroides exilicauda (Bark scorpion).